The sequence spans 615 residues: 1-deoxy-D-xylulose-5-phosphate synthase (615 aa).

Thiamine diphosphate contacts are provided by residues His76 and 117–119; that span reads GHS. Residue Asp148 coordinates Mg(2+). Thiamine diphosphate contacts are provided by residues 149–150, Asn177, Tyr284, and Glu365; that span reads GA. Asn177 lines the Mg(2+) pocket.

Belongs to the transketolase family. DXPS subfamily. Homodimer. Mg(2+) is required as a cofactor. Requires thiamine diphosphate as cofactor.

It catalyses the reaction D-glyceraldehyde 3-phosphate + pyruvate + H(+) = 1-deoxy-D-xylulose 5-phosphate + CO2. Its pathway is metabolic intermediate biosynthesis; 1-deoxy-D-xylulose 5-phosphate biosynthesis; 1-deoxy-D-xylulose 5-phosphate from D-glyceraldehyde 3-phosphate and pyruvate: step 1/1. Functionally, catalyzes the acyloin condensation reaction between C atoms 2 and 3 of pyruvate and glyceraldehyde 3-phosphate to yield 1-deoxy-D-xylulose-5-phosphate (DXP). The chain is 1-deoxy-D-xylulose-5-phosphate synthase from Francisella tularensis subsp. tularensis (strain FSC 198).